Consider the following 207-residue polypeptide: Ribonuclease HII (207 aa).

The RNase H type-2 domain occupies 19–207 (HCIAGVDEVG…PVKKALGIEE (189 aa)). Positions 25, 26, and 117 each coordinate a divalent metal cation.

The protein belongs to the RNase HII family. It depends on Mn(2+) as a cofactor. Mg(2+) serves as cofactor.

The protein resides in the cytoplasm. The catalysed reaction is Endonucleolytic cleavage to 5'-phosphomonoester.. Endonuclease that specifically degrades the RNA of RNA-DNA hybrids. The chain is Ribonuclease HII from Vibrio vulnificus (strain CMCP6).